The sequence spans 142 residues: uncharacterized protein (142 aa).

This is an uncharacterized protein from Bacillus anthracis.